The chain runs to 162 residues: Large ribosomal subunit protein bL17 (162 aa).

The disordered stretch occupies residues 126–162; sequence KKEEVKTKSRRGGKAKKAEPTTEAPANTTEETTDSAE. Positions 146 to 155 are enriched in low complexity; sequence TTEAPANTTE.

The protein belongs to the bacterial ribosomal protein bL17 family. In terms of assembly, part of the 50S ribosomal subunit. Contacts protein L32.

This is Large ribosomal subunit protein bL17 from Flavobacterium psychrophilum (strain ATCC 49511 / DSM 21280 / CIP 103535 / JIP02/86).